Reading from the N-terminus, the 102-residue chain is Small ribosomal subunit protein uS10 (102 aa).

The protein belongs to the universal ribosomal protein uS10 family. In terms of assembly, part of the 30S ribosomal subunit.

In terms of biological role, involved in the binding of tRNA to the ribosomes. In Arthrobacter sp. (strain FB24), this protein is Small ribosomal subunit protein uS10.